Consider the following 783-residue polypeptide: Protein SEY1 (783 aa).

Over 1 to 677 the chain is Cytoplasmic; the sequence is MTSQAIQLID…KRSIVTSSTH (677 aa). The region spanning 33-265 is the GB1/RHD3-type G domain; the sequence is GFNYHVISVF…YLLKPNYHHK (233 aa). Residue 43-50 coordinates GTP; it reads GSQSSGKS. The stretch at 449–472 forms a coiled coil; that stretch reads HEKKLQLRESELNALLSKIKKQLT. A helical transmembrane segment spans residues 678–698; the sequence is IPIWIYAVIVVLGWNEFMIVI. Topologically, residues 699 to 701 are lumenal; that stretch reads RNP. Residues 702–722 form a helical membrane-spanning segment; that stretch reads LFVTLALLSIVSFYFIQKFGL. Residues 723–783 lie on the Cytoplasmic side of the membrane; it reads WGPVMNVVNT…SSSSGNEDSD (61 aa).

It belongs to the TRAFAC class dynamin-like GTPase superfamily. GB1/RHD3 GTPase family. RHD3 subfamily.

It is found in the endoplasmic reticulum membrane. Cooperates with the reticulon proteins and tubule-shaping DP1 family proteins to generate and maintain the structure of the tubular endoplasmic reticulum network. Has GTPase activity, which is required for its function in ER organization. This chain is Protein SEY1, found in Candida glabrata (strain ATCC 2001 / BCRC 20586 / JCM 3761 / NBRC 0622 / NRRL Y-65 / CBS 138) (Yeast).